A 626-amino-acid polypeptide reads, in one-letter code: Putative L-type lectin-domain containing receptor kinase V.8 (626 aa).

Positions Met-1–Ser-21 are cleaved as a signal peptide. The tract at residues Thr-22–Ser-212 is legume-lectin like. Residues Thr-22–Lys-245 are Extracellular-facing. Asn-28, Asn-59, Asn-112, and Asn-162 each carry an N-linked (GlcNAc...) asparagine glycan. Residues Ile-246–Phe-266 traverse the membrane as a helical segment. The Cytoplasmic segment spans residues Val-267–Arg-626. The Protein kinase domain maps to Phe-303–Leu-562. Residues Leu-309–Val-317 and Lys-332 contribute to the ATP site. Asp-429 (proton acceptor) is an active-site residue.

The protein in the C-terminal section; belongs to the protein kinase superfamily. Ser/Thr protein kinase family. In the N-terminal section; belongs to the leguminous lectin family.

The protein localises to the cell membrane. The enzyme catalyses L-seryl-[protein] + ATP = O-phospho-L-seryl-[protein] + ADP + H(+). It catalyses the reaction L-threonyl-[protein] + ATP = O-phospho-L-threonyl-[protein] + ADP + H(+). The protein is Putative L-type lectin-domain containing receptor kinase V.8 (LECRK58) of Arabidopsis thaliana (Mouse-ear cress).